A 319-amino-acid chain; its full sequence is R-phycoerythrin gamma chain, chloroplastic (319 aa).

The N-terminal 71 residues, 1–71, are a transit peptide targeting the chloroplast; the sequence is MDSPAFAVTG…RPKKLASYKR (71 aa). 2 residues coordinate phycourobilin: Cys-96 and Cys-135. (2R,3E)-phycoerythrobilin is bound at residue Cys-212. Cys-299 contacts phycourobilin.

As to quaternary structure, heteromer of 4 alpha, 4 beta and one gamma chains. Post-translationally, contains four covalently linked bilin chromophores.

The protein resides in the plastid. Its subcellular location is the chloroplast thylakoid membrane. The sequence is that of R-phycoerythrin gamma chain, chloroplastic from Corallina officinalis (Coral seaweed).